The sequence spans 111 residues: Disintegrin acostatin-alpha (111 aa).

The first 20 residues, 1 to 20 (MIQVLLVTLCLAVFPYQGSS), serve as a signal peptide directing secretion. Residues 21-46 (IILESGNVNDYEVVYPRKVTALPKGA) constitute a propeptide that is removed on maturation. Residues 47-111 (IQPKNPCCDA…GDCPRKHFYA (65 aa)) enclose the Disintegrin domain. Pyrrolidone carboxylic acid; in Disintegrin acostatin-alpha, processed form is present on Gln-48. 4 disulfides stabilise this stretch: Cys-53-Cys-76, Cys-67-Cys-73, Cys-72-Cys-97, and Cys-85-Cys-104. The short motif at 89–91 (RGD) is the Cell attachment site element. A propeptide spanning residues 110-111 (YA) is cleaved from the precursor.

Belongs to the disintegrin family. Dimeric disintegrin subfamily. Heterodimer with subunit beta; disulfide-linked. In terms of tissue distribution, expressed by the venom gland.

The protein resides in the secreted. Inhibits fibrinogen interaction with platelets. Acts by binding to alpha-IIb/beta-3 (ITGA2B/ITGB3) on the platelet surface and inhibits ADP-induced platelet aggregation in human platelet-rich plasma. The sequence is that of Disintegrin acostatin-alpha from Agkistrodon contortrix contortrix (Southern copperhead).